Here is a 90-residue protein sequence, read N- to C-terminus: Probable dynein light chain 2, cytoplasmic (90 aa).

The protein belongs to the dynein light chain family.

It localises to the cytoplasm. The protein resides in the cytoskeleton. Functionally, acts as one of several non-catalytic accessory components of a dynein complex. The chain is Probable dynein light chain 2, cytoplasmic (dlc-2) from Caenorhabditis elegans.